A 645-amino-acid chain; its full sequence is Translation factor GUF1 homolog, mitochondrial (645 aa).

Residues 40 to 215 enclose the tr-type G domain; that stretch reads DKIRNFGIVA…AIIDRVPAPT (176 aa). GTP is bound by residues 49–56, 108–112, and 162–165; these read AHVDHGKS, DTPGH, and NKID.

Belongs to the TRAFAC class translation factor GTPase superfamily. Classic translation factor GTPase family. LepA subfamily.

The protein resides in the mitochondrion inner membrane. The catalysed reaction is GTP + H2O = GDP + phosphate + H(+). Its function is as follows. Promotes mitochondrial protein synthesis. May act as a fidelity factor of the translation reaction, by catalyzing a one-codon backward translocation of tRNAs on improperly translocated ribosomes. Binds to mitochondrial ribosomes in a GTP-dependent manner. This Caenorhabditis elegans protein is Translation factor GUF1 homolog, mitochondrial.